The following is a 98-amino-acid chain: NADH-ubiquinone oxidoreductase chain 4L (98 aa).

The next 3 membrane-spanning stretches (helical) occupy residues 2-22 (PSIS…MLMF), 28-48 (SSLL…TLII), and 61-81 (IMLL…LVMV).

Belongs to the complex I subunit 4L family. Core subunit of respiratory chain NADH dehydrogenase (Complex I) which is composed of 45 different subunits.

It is found in the mitochondrion inner membrane. It catalyses the reaction a ubiquinone + NADH + 5 H(+)(in) = a ubiquinol + NAD(+) + 4 H(+)(out). In terms of biological role, core subunit of the mitochondrial membrane respiratory chain NADH dehydrogenase (Complex I) which catalyzes electron transfer from NADH through the respiratory chain, using ubiquinone as an electron acceptor. Part of the enzyme membrane arm which is embedded in the lipid bilayer and involved in proton translocation. The chain is NADH-ubiquinone oxidoreductase chain 4L (MT-ND4L) from Allocebus trichotis (Hairy-eared dwarf lemur).